Here is a 102-residue protein sequence, read N- to C-terminus: uncharacterized protein (102 aa).

2 consecutive transmembrane segments (helical) span residues 24–44 and 55–75; these read AFIVPSAIFFFVFYFSLPVLT and IGAVSWAWLFAIAQFAMTWIL.

The protein resides in the cell membrane. This is an uncharacterized protein from Bacillus subtilis (strain 168).